The following is a 125-amino-acid chain: MLVIFLGILGLLANQVFGLPAKNAGHLYSTENPPEEELGFWCTYMESCRFCWDCEHGICKNKVNESMPWIIENSYLTTCAVSRWYDQCMYEEGNAKHYHTMDCSNPVPHNRPHRLGMKIYEREDL.

Residues 1–6 (MLVIFL) are Cytoplasmic-facing. The helical transmembrane segment at 7 to 27 (GILGLLANQVFGLPAKNAGHL) threads the bilayer. Residues 28-116 (YSTENPPEEE…VPHNRPHRLG (89 aa)) lie on the Extracellular side of the membrane. A glycan (N-linked (GlcNAc...) asparagine; by host) is linked at Asn64.

It belongs to the asfivirus MGF 110 family.

It is found in the host membrane. Plays a role in virus cell tropism, and may be required for efficient virus replication in macrophages. This chain is Protein MGF 110-3L, found in African swine fever virus (isolate Pig/Kenya/KEN-50/1950) (ASFV).